Reading from the N-terminus, the 450-residue chain is Nicotinamide phosphoribosyltransferase (450 aa).

Position 210 (Arg210) interacts with diphosphate. Asp233 lines the beta-nicotinamide D-ribonucleotide pocket. Positions 249 and 310 each coordinate diphosphate. Beta-nicotinamide D-ribonucleotide contacts are provided by residues 310 to 312, 364 to 365, and Arg403; these read RAD and GD.

The protein belongs to the NAPRTase family.

The enzyme catalyses beta-nicotinamide D-ribonucleotide + diphosphate = 5-phospho-alpha-D-ribose 1-diphosphate + nicotinamide + H(+). It functions in the pathway cofactor biosynthesis; NAD(+) biosynthesis; nicotinamide D-ribonucleotide from 5-phospho-alpha-D-ribose 1-diphosphate and nicotinamide: step 1/1. Functionally, catalyzes the condensation of nicotinamide with 5-phosphoribosyl-1-pyrophosphate to yield nicotinamide mononucleotide, an intermediate in the biosynthesis of NAD. This is Nicotinamide phosphoribosyltransferase from Mycoplasma genitalium (strain ATCC 33530 / DSM 19775 / NCTC 10195 / G37) (Mycoplasmoides genitalium).